A 368-amino-acid polypeptide reads, in one-letter code: Phosphoserine aminotransferase (368 aa).

Arg-42 provides a ligand contact to L-glutamate. Pyridoxal 5'-phosphate is bound by residues Trp-101, Thr-151, Asp-175, and Gln-198. Lys-199 bears the N6-(pyridoxal phosphate)lysine mark. 240-241 (NT) contributes to the pyridoxal 5'-phosphate binding site.

Belongs to the class-V pyridoxal-phosphate-dependent aminotransferase family. SerC subfamily. Homodimer. Requires pyridoxal 5'-phosphate as cofactor.

The protein localises to the cytoplasm. The catalysed reaction is O-phospho-L-serine + 2-oxoglutarate = 3-phosphooxypyruvate + L-glutamate. The enzyme catalyses 4-(phosphooxy)-L-threonine + 2-oxoglutarate = (R)-3-hydroxy-2-oxo-4-phosphooxybutanoate + L-glutamate. Its pathway is amino-acid biosynthesis; L-serine biosynthesis; L-serine from 3-phospho-D-glycerate: step 2/3. It functions in the pathway cofactor biosynthesis; pyridoxine 5'-phosphate biosynthesis; pyridoxine 5'-phosphate from D-erythrose 4-phosphate: step 3/5. Functionally, catalyzes the reversible conversion of 3-phosphohydroxypyruvate to phosphoserine and of 3-hydroxy-2-oxo-4-phosphonooxybutanoate to phosphohydroxythreonine. The chain is Phosphoserine aminotransferase from Polaromonas sp. (strain JS666 / ATCC BAA-500).